Reading from the N-terminus, the 178-residue chain is Ribosome maturation factor RimP (178 aa).

Belongs to the RimP family.

Its subcellular location is the cytoplasm. Its function is as follows. Required for maturation of 30S ribosomal subunits. The protein is Ribosome maturation factor RimP of Caulobacter vibrioides (strain ATCC 19089 / CIP 103742 / CB 15) (Caulobacter crescentus).